The primary structure comprises 228 residues: Cytochrome b5 domain-containing protein 1 (228 aa).

The Cytochrome b5 heme-binding domain maps to 17–83 (RRYFTPSEVA…DPQTRDIRKH (67 aa)). His83 is a binding site for heme.

This sequence belongs to the cytochrome b5 family.

Its subcellular location is the cytoplasm. It is found in the cytoskeleton. The protein localises to the cilium axoneme. Radial spoke stalk protein that binds heme under oxidizing conditions. Required for the coordinated beating of multiple cilia maybe by functioning in a redox signaling pathway. In Mus musculus (Mouse), this protein is Cytochrome b5 domain-containing protein 1 (Cyb5d1).